We begin with the raw amino-acid sequence, 215 residues long: NADH-quinone oxidoreductase subunit C (215 aa).

The protein belongs to the complex I 30 kDa subunit family. As to quaternary structure, NDH-1 is composed of 14 different subunits. Subunits NuoB, C, D, E, F, and G constitute the peripheral sector of the complex.

The protein localises to the cell inner membrane. It carries out the reaction a quinone + NADH + 5 H(+)(in) = a quinol + NAD(+) + 4 H(+)(out). Its function is as follows. NDH-1 shuttles electrons from NADH, via FMN and iron-sulfur (Fe-S) centers, to quinones in the respiratory chain. The immediate electron acceptor for the enzyme in this species is believed to be ubiquinone. Couples the redox reaction to proton translocation (for every two electrons transferred, four hydrogen ions are translocated across the cytoplasmic membrane), and thus conserves the redox energy in a proton gradient. This is NADH-quinone oxidoreductase subunit C from Methylobacterium sp. (strain 4-46).